A 251-amino-acid chain; its full sequence is Probable transcriptional regulatory protein TGRD_462 (251 aa).

Belongs to the TACO1 family.

The protein localises to the cytoplasm. The chain is Probable transcriptional regulatory protein TGRD_462 from Endomicrobium trichonymphae.